Reading from the N-terminus, the 289-residue chain is 4-hydroxybenzoate octaprenyltransferase (289 aa).

The next 9 helical transmembrane spans lie at 22–42, 45–65, 96–116, 118–138, 140–160, 164–184, 211–231, 236–256, and 267–287; these read AGWLLLLWPTLSALWLASHGF, WHLVTVFTLGTFLMRSAGCCI, LGLGAVLALLAFGLVLTTNAV, IAWSFAALAVTLAYPFAKRYV, MPQAVLGVAFSCGILMAFAAV, VPPLAWALLLGNLFWVIAYDT, VAGVMLSYLIFISIWAFALIQ, AIFMIAIALALAQALWHGWLI, and AFRLNHWLGFTVFAGVALSYW.

It belongs to the UbiA prenyltransferase family. Requires Mg(2+) as cofactor.

Its subcellular location is the cell inner membrane. The catalysed reaction is all-trans-octaprenyl diphosphate + 4-hydroxybenzoate = 4-hydroxy-3-(all-trans-octaprenyl)benzoate + diphosphate. The protein operates within cofactor biosynthesis; ubiquinone biosynthesis. Catalyzes the prenylation of para-hydroxybenzoate (PHB) with an all-trans polyprenyl group. Mediates the second step in the final reaction sequence of ubiquinone-8 (UQ-8) biosynthesis, which is the condensation of the polyisoprenoid side chain with PHB, generating the first membrane-bound Q intermediate 3-octaprenyl-4-hydroxybenzoate. This Polaromonas naphthalenivorans (strain CJ2) protein is 4-hydroxybenzoate octaprenyltransferase.